A 468-amino-acid polypeptide reads, in one-letter code: 3-isopropylmalate dehydratase large subunit (468 aa).

Residues Cys349, Cys409, and Cys412 each coordinate [4Fe-4S] cluster.

It belongs to the aconitase/IPM isomerase family. LeuC type 1 subfamily. In terms of assembly, heterodimer of LeuC and LeuD. It depends on [4Fe-4S] cluster as a cofactor.

It catalyses the reaction (2R,3S)-3-isopropylmalate = (2S)-2-isopropylmalate. It participates in amino-acid biosynthesis; L-leucine biosynthesis; L-leucine from 3-methyl-2-oxobutanoate: step 2/4. Functionally, catalyzes the isomerization between 2-isopropylmalate and 3-isopropylmalate, via the formation of 2-isopropylmaleate. The sequence is that of 3-isopropylmalate dehydratase large subunit from Shewanella baltica (strain OS223).